The following is a 352-amino-acid chain: Protein Wnt-3a (352 aa).

The signal sequence occupies residues M1–A18. 9 disulfides stabilise this stretch: C77/C88, C128/C136, C138/C155, C203/C217, C205/C212, C297/C312, C327/C342, C329/C339, and C334/C335. A glycan (N-linked (GlcNAc...) asparagine) is linked at N87. S209 carries the O-palmitoleoyl serine lipid modification. The N-linked (GlcNAc...) asparagine glycan is linked to N298.

The protein belongs to the Wnt family. In terms of processing, disulfide bonds have critical and distinct roles in secretion and activity. Loss of each conserved cysteine results in high molecular weight oxidized Wnt oligomers, which are formed through inter-Wnt disulfide bonding. Palmitoleoylation is required for efficient binding to frizzled receptors. Depalmitoleoylation leads to Wnt signaling pathway inhibition. At neurula in anterior neural fold; at tailbud in dorsal midline of midbrain.

It is found in the secreted. Its subcellular location is the extracellular space. The protein localises to the extracellular matrix. Its function is as follows. Ligand for members of the frizzled family of seven transmembrane receptors. Functions in the canonical Wnt signaling pathway that results in activation of transcription factors of the TCF/LEF family. Required for normal embryonic mesoderm development and formation of caudal somites. Required for normal morphogenesis of the developing neural tube. The chain is Protein Wnt-3a (wnt3a) from Xenopus laevis (African clawed frog).